The primary structure comprises 217 residues: Glycerol-3-phosphate acyltransferase (217 aa).

The next 5 membrane-spanning stretches (helical) occupy residues 1 to 21 (MAWA…SIPT), 54 to 74 (TAAI…VGGV), 84 to 104 (AIVP…AAIL), 126 to 146 (VLLV…LFML), and 165 to 185 (LLML…LAGI).

This sequence belongs to the PlsY family. Probably interacts with PlsX.

It is found in the cell inner membrane. The enzyme catalyses an acyl phosphate + sn-glycerol 3-phosphate = a 1-acyl-sn-glycero-3-phosphate + phosphate. The protein operates within lipid metabolism; phospholipid metabolism. Functionally, catalyzes the transfer of an acyl group from acyl-phosphate (acyl-PO(4)) to glycerol-3-phosphate (G3P) to form lysophosphatidic acid (LPA). This enzyme utilizes acyl-phosphate as fatty acyl donor, but not acyl-CoA or acyl-ACP. The chain is Glycerol-3-phosphate acyltransferase from Rippkaea orientalis (strain PCC 8801 / RF-1) (Cyanothece sp. (strain PCC 8801)).